Reading from the N-terminus, the 454-residue chain is Diaminobutyrate--2-oxoglutarate aminotransferase (454 aa).

K287 carries the post-translational modification N6-(pyridoxal phosphate)lysine.

Belongs to the class-III pyridoxal-phosphate-dependent aminotransferase family. It depends on pyridoxal 5'-phosphate as a cofactor.

It catalyses the reaction L-2,4-diaminobutanoate + 2-oxoglutarate = L-aspartate 4-semialdehyde + L-glutamate. Its pathway is amine and polyamine biosynthesis; 1,3-diaminopropane biosynthesis; 1,3-diaminopropane from L-aspartate 4-semialdehyde: step 1/2. This Haemophilus influenzae (strain ATCC 51907 / DSM 11121 / KW20 / Rd) protein is Diaminobutyrate--2-oxoglutarate aminotransferase (dat).